The chain runs to 145 residues: Endoribonuclease YbeY (145 aa).

Positions 109, 113, and 119 each coordinate Zn(2+).

The protein belongs to the endoribonuclease YbeY family. Requires Zn(2+) as cofactor.

Its subcellular location is the cytoplasm. Single strand-specific metallo-endoribonuclease involved in late-stage 70S ribosome quality control and in maturation of the 3' terminus of the 16S rRNA. This is Endoribonuclease YbeY from Vesicomyosocius okutanii subsp. Calyptogena okutanii (strain HA).